A 2027-amino-acid chain; its full sequence is Citron Rho-interacting kinase (2027 aa).

M1 bears the N-acetylmethionine mark. Residues 97–360 form the Protein kinase domain; sequence FEVRSLVGCG…FEGLCCHPFF (264 aa). ATP is bound by residues 103 to 111 and K126; that span reads VGCGHFAEV. D221 acts as the Proton acceptor in catalysis. In terms of domain architecture, AGC-kinase C-terminal spans 361 to 431; that stretch reads SKIDWNNIRN…SKALGILGRS (71 aa). Phosphoserine is present on residues S433, S440, S480, and S582. The stretch at 453 to 1297 forms a coiled coil; sequence IKSKELQDSQ…SAREEAAHRK (845 aa). Residues 1091 to 1302 are interaction with Rho/Rac; that stretch reads LAVKEHKAEI…AAHRKATDHP (212 aa). A Phosphotyrosine modification is found at Y1196. The segment covering 1290 to 1303 has biased composition (basic and acidic residues); sequence REEAAHRKATDHPH. Disordered stretches follow at residues 1290–1310 and 1322–1351; these read REEA…PATA and SPEH…EFSR. Residues 1327–1337 show a composition bias toward low complexity; that stretch reads PSAMSLLAPPS. A compositionally biased stretch (basic and acidic residues) spans 1339–1351; that stretch reads RRKESSTPEEFSR. Residues 1362–1411 form a Phorbol-ester/DAG-type zinc finger; the sequence is PHRFNVGLNMRATKCAVCLDTVHFGRQASKCLECQVMCHPKCSTCLPATC. Positions 1443 to 1563 constitute a PH domain; it reads SLHLEGWMKV…WVTALESVVA (121 aa). A CNH domain is found at 1591–1881; sequence RLDMNCTLPF…RYLGPAISSG (291 aa). K1721 bears the N6-acetyllysine mark. A disordered region spans residues 1905–2012; the sequence is ESGTEHHRGP…RGRLPAGAVR (108 aa). Phosphoserine is present on S1940. Residues 1948–2003 show a composition bias toward basic and acidic residues; that stretch reads SHPREPSTPHRYREGRTELRRDKSPGRPLEREKSPGRMLSTRRERSPGRLFEDSSR. Positions 1953 to 1958 match the SH3-binding motif; the sequence is PSTPHR. A Phosphoserine modification is found at S1993. At T2013 the chain carries Phosphothreonine.

It belongs to the protein kinase superfamily. AGC Ser/Thr protein kinase family. As to quaternary structure, directly interacts with KIF14 depending on the activation state (stronger interaction with the kinase-dead form). Homodimer. Interacts with TTC3.

It localises to the cytoplasm. It catalyses the reaction L-seryl-[protein] + ATP = O-phospho-L-seryl-[protein] + ADP + H(+). The catalysed reaction is L-threonyl-[protein] + ATP = O-phospho-L-threonyl-[protein] + ADP + H(+). Plays a role in cytokinesis. Required for KIF14 localization to the central spindle and midbody. Putative RHO/RAC effector that binds to the GTP-bound forms of RHO and RAC1. It probably binds p21 with a tighter specificity in vivo. Displays serine/threonine protein kinase activity. Plays an important role in the regulation of cytokinesis and the development of the central nervous system. Phosphorylates MYL9/MLC2. This is Citron Rho-interacting kinase (CIT) from Homo sapiens (Human).